We begin with the raw amino-acid sequence, 355 residues long: Histidinol-phosphate aminotransferase (355 aa).

Lys-222 is modified (N6-(pyridoxal phosphate)lysine).

It belongs to the class-II pyridoxal-phosphate-dependent aminotransferase family. Histidinol-phosphate aminotransferase subfamily. Requires pyridoxal 5'-phosphate as cofactor.

The catalysed reaction is L-histidinol phosphate + 2-oxoglutarate = 3-(imidazol-4-yl)-2-oxopropyl phosphate + L-glutamate. It participates in amino-acid biosynthesis; L-histidine biosynthesis; L-histidine from 5-phospho-alpha-D-ribose 1-diphosphate: step 7/9. The polypeptide is Histidinol-phosphate aminotransferase (Natronomonas pharaonis (strain ATCC 35678 / DSM 2160 / CIP 103997 / JCM 8858 / NBRC 14720 / NCIMB 2260 / Gabara) (Halobacterium pharaonis)).